The primary structure comprises 320 residues: L-lactate dehydrogenase 2 (320 aa).

The NAD(+) site is built by Val16, Asp37, Lys42, and Tyr69. Substrate is bound at residue Arg94. NAD(+) contacts are provided by residues Ser107, Val124–Asn126, and Thr149. Asn126 to Asp129 is a substrate binding site. Residue Asp154 to Arg157 coordinates substrate. Beta-D-fructose 1,6-bisphosphate-binding residues include Arg159 and His174. His181 functions as the Proton acceptor in the catalytic mechanism. Position 235 (Thr235) interacts with substrate.

It belongs to the LDH/MDH superfamily. LDH family. Homotetramer.

The protein resides in the cytoplasm. The catalysed reaction is (S)-lactate + NAD(+) = pyruvate + NADH + H(+). The protein operates within fermentation; pyruvate fermentation to lactate; (S)-lactate from pyruvate: step 1/1. Allosterically activated by fructose 1,6-bisphosphate (FBP). Catalyzes the conversion of lactate to pyruvate. This is L-lactate dehydrogenase 2 from Clostridium acetobutylicum (strain ATCC 824 / DSM 792 / JCM 1419 / IAM 19013 / LMG 5710 / NBRC 13948 / NRRL B-527 / VKM B-1787 / 2291 / W).